A 429-amino-acid polypeptide reads, in one-letter code: 3-phosphoshikimate 1-carboxyvinyltransferase (429 aa).

3-phosphoshikimate-binding residues include Lys-23, Ser-24, and Arg-28. Lys-23 provides a ligand contact to phosphoenolpyruvate. Residues Gly-95 and Arg-123 each coordinate phosphoenolpyruvate. Residues Ser-168, Gln-170, Asp-316, and Lys-343 each contribute to the 3-phosphoshikimate site. Gln-170 contacts phosphoenolpyruvate. Catalysis depends on Asp-316, which acts as the Proton acceptor. Residues Arg-347 and Arg-389 each contribute to the phosphoenolpyruvate site.

Belongs to the EPSP synthase family. In terms of assembly, monomer.

The protein resides in the cytoplasm. It catalyses the reaction 3-phosphoshikimate + phosphoenolpyruvate = 5-O-(1-carboxyvinyl)-3-phosphoshikimate + phosphate. It participates in metabolic intermediate biosynthesis; chorismate biosynthesis; chorismate from D-erythrose 4-phosphate and phosphoenolpyruvate: step 6/7. In terms of biological role, catalyzes the transfer of the enolpyruvyl moiety of phosphoenolpyruvate (PEP) to the 5-hydroxyl of shikimate-3-phosphate (S3P) to produce enolpyruvyl shikimate-3-phosphate and inorganic phosphate. This chain is 3-phosphoshikimate 1-carboxyvinyltransferase, found in Bacillus cereus (strain B4264).